The primary structure comprises 330 residues: Methionyl-tRNA formyltransferase (330 aa).

112 to 115 (SLLP) contacts (6S)-5,6,7,8-tetrahydrofolate.

It belongs to the Fmt family.

The enzyme catalyses L-methionyl-tRNA(fMet) + (6R)-10-formyltetrahydrofolate = N-formyl-L-methionyl-tRNA(fMet) + (6S)-5,6,7,8-tetrahydrofolate + H(+). Its function is as follows. Attaches a formyl group to the free amino group of methionyl-tRNA(fMet). The formyl group appears to play a dual role in the initiator identity of N-formylmethionyl-tRNA by promoting its recognition by IF2 and preventing the misappropriation of this tRNA by the elongation apparatus. In Alcanivorax borkumensis (strain ATCC 700651 / DSM 11573 / NCIMB 13689 / SK2), this protein is Methionyl-tRNA formyltransferase.